The primary structure comprises 217 residues: Transmembrane protein 247 (217 aa).

The span at methionine 1–glutamate 10 shows a compositional bias: basic and acidic residues. The tract at residues methionine 1 to glycine 87 is disordered. The stretch at arginine 109–threonine 154 forms a coiled coil. 2 consecutive transmembrane segments (helical) span residues leucine 165–isoleucine 185 and isoleucine 192–isoleucine 212.

Its subcellular location is the membrane. In Bos taurus (Bovine), this protein is Transmembrane protein 247.